Reading from the N-terminus, the 88-residue chain is HssA/B-like protein 17 (88 aa).

It belongs to the hssA/B family.

The protein is HssA/B-like protein 17 (hssl17) of Dictyostelium discoideum (Social amoeba).